We begin with the raw amino-acid sequence, 274 residues long: NAD kinase (274 aa).

Residue aspartate 59 is the Proton acceptor of the active site. NAD(+) contacts are provided by residues 59–60 (DG), 133–134 (ND), arginine 144, aspartate 163, 174–179 (TAYALS), and glutamine 233.

This sequence belongs to the NAD kinase family. A divalent metal cation is required as a cofactor.

Its subcellular location is the cytoplasm. It catalyses the reaction NAD(+) + ATP = ADP + NADP(+) + H(+). In terms of biological role, involved in the regulation of the intracellular balance of NAD and NADP, and is a key enzyme in the biosynthesis of NADP. Catalyzes specifically the phosphorylation on 2'-hydroxyl of the adenosine moiety of NAD to yield NADP. The protein is NAD kinase of Aquifex aeolicus (strain VF5).